The chain runs to 177 residues: Neuroblastoma suppressor of tumorigenicity 1 (177 aa).

Positions 1–16 (MLWFVVGALFPALLLA) are cleaved as a signal peptide. 5 disulfides stabilise this stretch: Cys-34/Cys-84, Cys-48/Cys-98, Cys-58/Cys-117, Cys-62/Cys-119, and Cys-81/Cys-122. One can recognise a CTCK domain in the interval 34-123 (CEAKNITQIV…ILHCSCQACG (90 aa)). The tract at residues 143–177 (MPAEGPGPHHYAHHQQEVEEPPASSHHHHEEEGDE) is disordered.

Belongs to the DAN family.

It is found in the secreted. May act as a tumor suppressor. This is Neuroblastoma suppressor of tumorigenicity 1 (NBL1) from Gallus gallus (Chicken).